The sequence spans 508 residues: MTPRQRLTVLATGLGIFMVFVDVNIVNVALPSIQKVFHTGEQGLQWAVAGYSLGMAAVLMSCALLGDRYGRRRSFVFGVTLFVVSSIVCVLPVSLAVFTVARVIQGLGAAFISVLSLALLSHSFPNPRMKARAISNWMAIGMVGAASAPALGGLMVDGLGWRSVFLVNVPLGAIVWLLTLVGVDESQDPEPTQLDWVGQLTLIPAVALIAYTIIEAPRFDRQSAGFVAALLLAAGVLLWLFVRHEHRAAFPLVDLKLFAEPLYRSVLIVYFVVMSCFFGTLMVITQHFQNVRDLSPLHAGLMMLPVPAGFGVASLLAGRAVNKWGPQLPVLTCLAAMFIGLAIFAISMDHAHPVALVGLTIFGAGAGGCATPLLHLGMTKVDDGRAGMAAGMLNLQRSLGGIFGVAFLGTIVAAWLGAALPNTMADEIPDPIARAIVVDVIVDSANPHAHAAFIGPGHRITAAQEDEIVLAADAVFVSGIKLALGGAAVLLTGAFVLGWTRFPRTPAS.

14 consecutive transmembrane segments (helical) span residues V9–A29, W46–G66, F75–L95, I104–F124, N136–V156, S163–V183, L194–I214, Q222–V242, S265–T285, L297–A317, L328–M348, V354–L374, L399–A419, and G479–W499.

Belongs to the major facilitator superfamily.

The protein resides in the cell inner membrane. Functionally, involved in resistance to ethambutol and isoniazid. This is Drug efflux pump JefA from Mycobacterium tuberculosis (strain CDC 1551 / Oshkosh).